The following is a 253-amino-acid chain: Triosephosphate isomerase (253 aa).

Residue 9–11 coordinates substrate; sequence NWK. The active-site Electrophile is His-97. Catalysis depends on Glu-169, which acts as the Proton acceptor. Substrate contacts are provided by residues Gly-175, Ser-215, and 236–237; that span reads GG.

Belongs to the triosephosphate isomerase family. In terms of assembly, homodimer.

It is found in the cytoplasm. It catalyses the reaction D-glyceraldehyde 3-phosphate = dihydroxyacetone phosphate. It functions in the pathway carbohydrate biosynthesis; gluconeogenesis. Its pathway is carbohydrate degradation; glycolysis; D-glyceraldehyde 3-phosphate from glycerone phosphate: step 1/1. Involved in the gluconeogenesis. Catalyzes stereospecifically the conversion of dihydroxyacetone phosphate (DHAP) to D-glyceraldehyde-3-phosphate (G3P). The protein is Triosephosphate isomerase of Staphylococcus epidermidis (strain ATCC 35984 / DSM 28319 / BCRC 17069 / CCUG 31568 / BM 3577 / RP62A).